An 83-amino-acid polypeptide reads, in one-letter code: Conotoxin MiEr92 (83 aa).

The first 22 residues, methionine 1–alanine 22, serve as a signal peptide directing secretion. Positions aspartate 23–threonine 49 are excised as a propeptide. 3 disulfide bridges follow: cysteine 52–cysteine 67, cysteine 59–cysteine 72, and cysteine 66–cysteine 81.

This sequence belongs to the conotoxin O1 superfamily. Expressed by the venom duct.

It localises to the secreted. This chain is Conotoxin MiEr92, found in Conus miles (Soldier cone).